Here is a 178-residue protein sequence, read N- to C-terminus: Protein GrpE (178 aa).

A compositionally biased stretch (basic and acidic residues) spans 1–11 (MAEDQAPREET). The disordered stretch occupies residues 1–30 (MAEDQAPREETVEAPELTEAPEIDELETLR).

It belongs to the GrpE family. Homodimer.

The protein localises to the cytoplasm. In terms of biological role, participates actively in the response to hyperosmotic and heat shock by preventing the aggregation of stress-denatured proteins, in association with DnaK and GrpE. It is the nucleotide exchange factor for DnaK and may function as a thermosensor. Unfolded proteins bind initially to DnaJ; upon interaction with the DnaJ-bound protein, DnaK hydrolyzes its bound ATP, resulting in the formation of a stable complex. GrpE releases ADP from DnaK; ATP binding to DnaK triggers the release of the substrate protein, thus completing the reaction cycle. Several rounds of ATP-dependent interactions between DnaJ, DnaK and GrpE are required for fully efficient folding. The polypeptide is Protein GrpE (Cereibacter sphaeroides (strain ATCC 17023 / DSM 158 / JCM 6121 / CCUG 31486 / LMG 2827 / NBRC 12203 / NCIMB 8253 / ATH 2.4.1.) (Rhodobacter sphaeroides)).